Consider the following 145-residue polypeptide: D-aminoacyl-tRNA deacylase (145 aa).

The short motif at 137–138 (GP) is the Gly-cisPro motif, important for rejection of L-amino acids element.

The protein belongs to the DTD family. Homodimer.

The protein resides in the cytoplasm. It carries out the reaction glycyl-tRNA(Ala) + H2O = tRNA(Ala) + glycine + H(+). The enzyme catalyses a D-aminoacyl-tRNA + H2O = a tRNA + a D-alpha-amino acid + H(+). Functionally, an aminoacyl-tRNA editing enzyme that deacylates mischarged D-aminoacyl-tRNAs. Also deacylates mischarged glycyl-tRNA(Ala), protecting cells against glycine mischarging by AlaRS. Acts via tRNA-based rather than protein-based catalysis; rejects L-amino acids rather than detecting D-amino acids in the active site. By recycling D-aminoacyl-tRNA to D-amino acids and free tRNA molecules, this enzyme counteracts the toxicity associated with the formation of D-aminoacyl-tRNA entities in vivo and helps enforce protein L-homochirality. The polypeptide is D-aminoacyl-tRNA deacylase (Salmonella agona (strain SL483)).